The chain runs to 361 residues: tRNA/tmRNA (uracil-C(5))-methyltransferase (361 aa).

Positions 185, 213, 218, 234, and 294 each coordinate S-adenosyl-L-methionine. Cys-319 (nucleophile) is an active-site residue. The active-site Proton acceptor is Glu-353.

The protein belongs to the class I-like SAM-binding methyltransferase superfamily. RNA M5U methyltransferase family. TrmA subfamily.

It carries out the reaction uridine(54) in tRNA + S-adenosyl-L-methionine = 5-methyluridine(54) in tRNA + S-adenosyl-L-homocysteine + H(+). It catalyses the reaction uridine(341) in tmRNA + S-adenosyl-L-methionine = 5-methyluridine(341) in tmRNA + S-adenosyl-L-homocysteine + H(+). In terms of biological role, dual-specificity methyltransferase that catalyzes the formation of 5-methyluridine at position 54 (m5U54) in all tRNAs, and that of position 341 (m5U341) in tmRNA (transfer-mRNA). This Pseudomonas putida (strain W619) protein is tRNA/tmRNA (uracil-C(5))-methyltransferase.